The primary structure comprises 92 residues: Small ribosomal subunit protein uS19 (92 aa).

This sequence belongs to the universal ribosomal protein uS19 family.

Protein S19 forms a complex with S13 that binds strongly to the 16S ribosomal RNA. This chain is Small ribosomal subunit protein uS19, found in Photorhabdus laumondii subsp. laumondii (strain DSM 15139 / CIP 105565 / TT01) (Photorhabdus luminescens subsp. laumondii).